The sequence spans 136 residues: Nucleoside diphosphate kinase (136 aa).

Residues Lys-10, Phe-58, Arg-86, Thr-92, Arg-104, and Asn-114 each contribute to the ATP site. His-117 serves as the catalytic Pros-phosphohistidine intermediate.

This sequence belongs to the NDK family. As to quaternary structure, homotetramer. Requires Mg(2+) as cofactor.

Its subcellular location is the cytoplasm. It carries out the reaction a 2'-deoxyribonucleoside 5'-diphosphate + ATP = a 2'-deoxyribonucleoside 5'-triphosphate + ADP. The catalysed reaction is a ribonucleoside 5'-diphosphate + ATP = a ribonucleoside 5'-triphosphate + ADP. In terms of biological role, major role in the synthesis of nucleoside triphosphates other than ATP. The ATP gamma phosphate is transferred to the NDP beta phosphate via a ping-pong mechanism, using a phosphorylated active-site intermediate. This Corynebacterium efficiens (strain DSM 44549 / YS-314 / AJ 12310 / JCM 11189 / NBRC 100395) protein is Nucleoside diphosphate kinase.